Consider the following 66-residue polypeptide: Small ribosomal subunit protein bS21 (66 aa).

Belongs to the bacterial ribosomal protein bS21 family.

The polypeptide is Small ribosomal subunit protein bS21 (Rickettsia peacockii (strain Rustic)).